A 98-amino-acid polypeptide reads, in one-letter code: NADH-ubiquinone oxidoreductase chain 4L (98 aa).

A run of 3 helical transmembrane segments spans residues 1–21, 29–49, and 59–79; these read MTLI…GFLM, ALLC…LTVL, and MPII…ALLV.

Belongs to the complex I subunit 4L family. As to quaternary structure, core subunit of respiratory chain NADH dehydrogenase (Complex I) which is composed of 45 different subunits.

The protein localises to the mitochondrion inner membrane. It carries out the reaction a ubiquinone + NADH + 5 H(+)(in) = a ubiquinol + NAD(+) + 4 H(+)(out). Functionally, core subunit of the mitochondrial membrane respiratory chain NADH dehydrogenase (Complex I) which catalyzes electron transfer from NADH through the respiratory chain, using ubiquinone as an electron acceptor. Part of the enzyme membrane arm which is embedded in the lipid bilayer and involved in proton translocation. This is NADH-ubiquinone oxidoreductase chain 4L (MT-ND4L) from Inia geoffrensis (Amazon river dolphin).